The sequence spans 347 residues: Sulfate/thiosulfate import ATP-binding protein CysA 1 (347 aa).

The 235-residue stretch at 3–237 (VRVESLRKEF…PVSPFVYGFI (235 aa)) folds into the ABC transporter domain. 35–42 (GPSGSGKT) is a binding site for ATP.

Belongs to the ABC transporter superfamily. Sulfate/tungstate importer (TC 3.A.1.6) family. The complex is composed of two ATP-binding proteins (CysA), two transmembrane proteins (CysT and CysW) and a solute-binding protein (CysP).

It is found in the cell inner membrane. The catalysed reaction is sulfate(out) + ATP + H2O = sulfate(in) + ADP + phosphate + H(+). It catalyses the reaction thiosulfate(out) + ATP + H2O = thiosulfate(in) + ADP + phosphate + H(+). In terms of biological role, part of the ABC transporter complex CysAWTP involved in sulfate/thiosulfate import. Responsible for energy coupling to the transport system. This chain is Sulfate/thiosulfate import ATP-binding protein CysA 1, found in Rhizobium meliloti (strain 1021) (Ensifer meliloti).